The primary structure comprises 920 residues: Rho GTPase-activating protein REN1 (920 aa).

Polar residues predominate over residues Met1–Ser10. The disordered stretch occupies residues Met1 to Ser64. The span at Gln17–Glu31 shows a compositional bias: low complexity. A compositionally biased stretch (polar residues) spans Pro45–Ser64. The PH domain maps to Thr60–Thr167. A Rho-GAP domain is found at Leu213 to Phe412. Disordered stretches follow at residues Leu417–Met592, Arg719–Lys825, and Arg837–Arg920. The span at Glu434–Asn463 shows a compositional bias: acidic residues. A compositionally biased stretch (polar residues) spans Glu464 to Ala473. 3 stretches are compositionally biased toward basic and acidic residues: residues Ser475 to Asn491, Lys499 to Lys509, and Pro520 to Val532. The segment covering Ser555–Ser568 has biased composition (polar residues). Residues Ser577–Gly586 are compositionally biased toward basic residues. The stretch at Ser598–Ser728 forms a coiled coil. 2 stretches are compositionally biased toward basic and acidic residues: residues Ala734–Ser768 and Arg776–Ser788. Residues Glu814 to Lys825 show a composition bias toward low complexity. Polar residues-rich tracts occupy residues Gly854–Arg864 and Gly872–Gln885. Residues Ile889–Arg903 show a composition bias toward basic and acidic residues. A compositionally biased stretch (polar residues) spans His910 to Arg920.

As to quaternary structure, interacts with ARAC11/ROP1. Expressed in pollen and pollen tubes.

Its subcellular location is the cell membrane. Functionally, acts as a GTPase activator for the Rac-type GTPase by converting it to an inactive GDP-bound state. Maintains the global inactivation of ARAC11/ROP1 at the apex in pollen tubes in order to regulate the polar cell growth. This is Rho GTPase-activating protein REN1 (REN1) from Arabidopsis thaliana (Mouse-ear cress).